The primary structure comprises 325 residues: Forkhead box protein B1 (325 aa).

Residues 12–103 (QKPPYSYISL…GDMFENGSFL (92 aa)) constitute a DNA-binding region (fork-head). Positions 284 to 309 (LSNSPPSLSPTSSQTATSQSSPATPS) are enriched in low complexity. Positions 284 to 325 (LSNSPPSLSPTSSQTATSQSSPATPSETLTSPASALHSVAVH) are disordered.

Its subcellular location is the nucleus. Functionally, transcription factor expressed by neural progenitor cells in specific regions of the embryonic neuroepithelium. Essential for the mammillary nuclei maintenance. Negatively regulates the proliferation of oligodendrocyte progenitors and promotes oligodendrocyte maturation. Also expressed in mammary glands, plays a role in lactation, controls development of mammary glands and the inferior colliculi of the midbrain in the central nervous system that regulates the milk-ejection reflex. The protein is Forkhead box protein B1 (FOXB1) of Homo sapiens (Human).